A 365-amino-acid chain; its full sequence is UPF0283 membrane protein Avi_2471 (365 aa).

Residues 1-10 (MSKAPEDQRP) show a composition bias toward basic and acidic residues. The segment at 1–47 (MSKAPEDQRPMPRRPAAFSLEEPSSSPARPPFAEAQEPQRRAPKSFD) is disordered. 2 helical membrane passes run 83 to 103 (FGKLAGAAFGALASFAIGLWI) and 117 to 137 (LGYTALTLLGIGLLALTVVVI).

The protein belongs to the UPF0283 family.

It is found in the cell inner membrane. In Allorhizobium ampelinum (strain ATCC BAA-846 / DSM 112012 / S4) (Agrobacterium vitis (strain S4)), this protein is UPF0283 membrane protein Avi_2471.